Consider the following 464-residue polypeptide: Soluble pyridine nucleotide transhydrogenase (464 aa).

35–44 (DDRRQVGGNC) contacts FAD.

It belongs to the class-I pyridine nucleotide-disulfide oxidoreductase family. It depends on FAD as a cofactor.

The protein resides in the cytoplasm. It catalyses the reaction NAD(+) + NADPH = NADH + NADP(+). In terms of biological role, conversion of NADPH, generated by peripheral catabolic pathways, to NADH, which can enter the respiratory chain for energy generation. The sequence is that of Soluble pyridine nucleotide transhydrogenase from Pseudomonas putida (strain GB-1).